The sequence spans 233 residues: C-type lectin domain-containing protein 87 (233 aa).

An N-terminal signal peptide occupies residues 1-20 (MRFFRFLVFPVIAGLSSVLA). Residue asparagine 26 is glycosylated (N-linked (GlcNAc...) asparagine). Serine 32 carries O-linked (Xyl...) (chondroitin sulfate) serine glycosylation. An N-linked (GlcNAc...) asparagine glycan is attached at asparagine 81. Positions 93 to 223 (FADSCYWIET…CTYLLYSICE (131 aa)) constitute a C-type lectin domain. 2 disulfide bridges follow: cysteine 114-cysteine 222 and cysteine 193-cysteine 214. Asparagine 225 carries N-linked (GlcNAc...) asparagine glycosylation.

The polypeptide is C-type lectin domain-containing protein 87 (Caenorhabditis briggsae).